We begin with the raw amino-acid sequence, 485 residues long: Efflux pump bik6 (485 aa).

6 consecutive transmembrane segments (helical) span residues valine 42–tyrosine 62, leucine 86–glycine 106, lysine 108–alanine 128, phenylalanine 139–isoleucine 159, tyrosine 172–alanine 192, and tryptophan 199–leucine 219. Asparagine 241 is a glycosylation site (N-linked (GlcNAc...) asparagine). 6 helical membrane passes run methionine 269–leucine 289, tryptophan 306–alanine 326, leucine 353–threonine 373, serine 379–phenylalanine 399, alanine 417–tryptophan 437, and tryptophan 447–phenylalanine 467.

It belongs to the major facilitator superfamily.

Its subcellular location is the membrane. Functionally, efflux pump; part of the gene cluster that mediates the biosynthesis of bikaverin, a red pigment also considered as a mycotoxin. The sequence is that of Efflux pump bik6 from Gibberella fujikuroi (strain CBS 195.34 / IMI 58289 / NRRL A-6831) (Bakanae and foot rot disease fungus).